The sequence spans 173 residues: NADH-ubiquinone oxidoreductase chain 6 (173 aa).

Helical transmembrane passes span M1–S21, P25–G45, L53–L73, W82–G102, and G141–L161.

This sequence belongs to the complex I subunit 6 family.

It is found in the mitochondrion membrane. The catalysed reaction is a ubiquinone + NADH + 5 H(+)(in) = a ubiquinol + NAD(+) + 4 H(+)(out). Core subunit of the mitochondrial membrane respiratory chain NADH dehydrogenase (Complex I) that is believed to belong to the minimal assembly required for catalysis. Complex I functions in the transfer of electrons from NADH to the respiratory chain. The immediate electron acceptor for the enzyme is believed to be ubiquinone. In Squalus acanthias (Spiny dogfish), this protein is NADH-ubiquinone oxidoreductase chain 6 (MT-ND6).